Consider the following 297-residue polypeptide: Phosphatidylglycerol--prolipoprotein diacylglyceryl transferase (297 aa).

4 helical membrane passes run 20-40, 58-78, 104-124, and 133-153; these read FLTIRWYGLLISISVVIGLFI, ILPSLIISSIIGARAYYVIFE, IAIWQGGIAIHGGLIGGFLCI, and IHLKTFIDILIPSIILGQSIG. An a 1,2-diacyl-sn-glycero-3-phospho-(1'-sn-glycerol)-binding site is contributed by R154. 3 helical membrane passes run 194–214, 225–245, and 266–286; these read TFIYESLWNFLIFILLITIFY, GFISCLYLIGYSFGRFWIEGL, and AQFISIFLFSSGLIGLFFLRL.

It belongs to the Lgt family.

It localises to the cell inner membrane. The catalysed reaction is L-cysteinyl-[prolipoprotein] + a 1,2-diacyl-sn-glycero-3-phospho-(1'-sn-glycerol) = an S-1,2-diacyl-sn-glyceryl-L-cysteinyl-[prolipoprotein] + sn-glycerol 1-phosphate + H(+). It functions in the pathway protein modification; lipoprotein biosynthesis (diacylglyceryl transfer). Functionally, catalyzes the transfer of the diacylglyceryl group from phosphatidylglycerol to the sulfhydryl group of the N-terminal cysteine of a prolipoprotein, the first step in the formation of mature lipoproteins. The sequence is that of Phosphatidylglycerol--prolipoprotein diacylglyceryl transferase from Prochlorococcus marinus subsp. pastoris (strain CCMP1986 / NIES-2087 / MED4).